Consider the following 908-residue polypeptide: Glutamate receptor ionotropic, kainate 2 (908 aa).

The N-terminal stretch at 1–31 (MQRIAGITKMVTHRRWLGLLLLLLCVGYSHG) is a signal peptide. Residues 32-561 (MPHVLRFGGI…VFSFLNPLSP (530 aa)) are Extracellular-facing. N-linked (GlcNAc...) asparagine glycosylation is found at Asn-67, Asn-73, Asn-275, Asn-378, Asn-412, Asn-423, and Asn-430. A disulfide bond links Cys-96 and Cys-347. L-glutamate-binding residues include Pro-516, Ala-518, and Arg-523. Asn-546 carries an N-linked (GlcNAc...) asparagine glycan. A helical membrane pass occupies residues 562 to 582 (DIWMYILLAYLGVSCVLFVIA). Over 583–638 (RFSPYEWYNPHPCNPDSDVVENNFTLLNSFWFGVGALMQQGSELMPKALSTRIVGG) the chain is Cytoplasmic. Residues 639-659 (IWWFFTLIIISSYTANLAAFL) form a helical membrane-spanning segment. The Extracellular segment spans residues 660 to 819 (TVERMESPID…KEASALGVQN (160 aa)). Positions 689, 690, and 738 each coordinate L-glutamate. A disulfide bridge connects residues Cys-750 and Cys-804. N-linked (GlcNAc...) asparagine glycosylation is present at Asn-751. A helical transmembrane segment spans residues 820 to 840 (IGGIFIVLAAGLVLSVFVAVG). Residues 841–908 (EFLYKSKQNA…RRLPGKETMA (68 aa)) are Cytoplasmic-facing.

Belongs to the glutamate-gated ion channel (TC 1.A.10.1) family. GRIK2 subfamily. Homotetramer and heterotetramer with GRIK5. Tetramers may be formed by the dimerization of dimers.

It is found in the cell membrane. Its subcellular location is the postsynaptic cell membrane. The catalysed reaction is Ca(2+)(in) = Ca(2+)(out). The enzyme catalyses Na(+)(in) = Na(+)(out). Its activity is regulated as follows. Cold receptor activity activated by temperatures between 10-19 degrees Celsius. Its function is as follows. Ionotropic glutamate receptor that functions as a cation-permeable ligand-gated ion channel, gated by L-glutamate and the glutamatergic agonist kainic acid. L-glutamate acts as an excitatory neurotransmitter at many synapses in the central nervous system. Binding of the excitatory neurotransmitter L-glutamate induces a conformation change, leading to the opening of the cation channel, and thereby converts the chemical signal to an electrical impulse. The receptor then desensitizes rapidly and enters a transient inactive state, characterized by the presence of bound agonist. Functionally, independent of its ionotropic glutamate receptor activity, acts as a thermoreceptor conferring sensitivity to cold temperatures. Functions in dorsal root ganglion neurons. This Danio rerio (Zebrafish) protein is Glutamate receptor ionotropic, kainate 2.